The following is a 91-amino-acid chain: N.vectensis toxin 8 (91 aa).

The N-terminal stretch at 1-26 (MNSLLKVAVVCLVMLVACFVPRVILT) is a signal peptide. Intrachain disulfides connect Cys45–Cys76, Cys47–Cys67, and Cys60–Cys77.

In terms of tissue distribution, expressed in ectodermal gland cells.

Functionally, has toxic effects on zebrafish larvae. It causes contractile paralysis and twitching of the tail within 20 minutes, followed by death within 30 minutes. Does not show any toxicity when injected into arthropods (cherry shrimps or grass shrimps). This is N.vectensis toxin 8 from Nematostella vectensis (Starlet sea anemone).